Consider the following 427-residue polypeptide: Indole diterpene prenyltransferase ptmD (427 aa).

77-78 serves as a coordination point for L-tryptophan; the sequence is YV. Residues R99, K186, Y188, R259, K261, Y263, Y344, Y409, and Y413 each coordinate substrate.

This sequence belongs to the tryptophan dimethylallyltransferase family.

It participates in secondary metabolite biosynthesis. Indole diterpene prenyltransferase; part of the gene cluster that mediates the biosynthesis of the indole diterpenes penitrems. The geranylgeranyl diphosphate (GGPP) synthase ptmG catalyzes the first step in penitrem biosynthesis via conversion of farnesyl pyrophosphate and isopentyl pyrophosphate into geranylgeranyl pyrophosphate (GGPP). Condensation of indole-3-glycerol phosphate with GGPP by the prenyl transferase ptmC then forms 3-geranylgeranylindole (3-GGI). Epoxidation by the FAD-dependent monooxygenase ptmM leads to a epoxidized-GGI that is substrate of the terpene cyclase ptmB for cyclization to yield paspaline. Paspaline is subsequently converted to 13-desoxypaxilline by the cytochrome P450 monooxygenase ptmP, the latter being then converted to paxilline by the cytochrome P450 monooxygenase ptmQ. Paxilline is converted to beta-paxitriol via C-10 ketoreduction by the short-chain dehydrogenase ptmH which can be monoprenylated at the C-20 by the indole diterpene prenyltransferase ptmD. A two-step elimination (acetylation and elimination) process performed by the O-acetyltransferase ptmV and ptmI leads to the production of the prenylated form of penijanthine. The FAD-linked oxidoreductase ptmO then converts the prenylated form of penijanthine into PC-M5 which is in turn transformed into PC-M4 by the aromatic dimethylallyltransferase ptmE. Five sequential oxidative transformations performed by the cytochrome P450 monooxygenases ptmK, ptmU, ptmL, ptmN and ptmJ yield the various penitrem compounds. PtmK, ptmU and ptmM are involved in the formation of the key bicyclic ring of penitrem C via the formation of the intermediates secopenitrem D and penitrem D. PtmL catalyzes the epoxidation of penitrem D and C to yield penitrem B and F, respectively. PtmJ catalyzes the last benzylic hydroxylation to convert penitrem B to prenitrem E and penitrem F to penitrem A. The protein is Indole diterpene prenyltransferase ptmD of Penicillium ochrochloron.